Consider the following 393-residue polypeptide: Phosphoglycerate kinase (393 aa).

Residues 21–23, Arg-37, 60–63, Arg-115, and Arg-148 contribute to the substrate site; these read DLN and HLGR. ATP contacts are provided by residues Lys-199, Glu-321, and 347 to 350; that span reads GGDT.

The protein belongs to the phosphoglycerate kinase family. Monomer.

It is found in the cytoplasm. It catalyses the reaction (2R)-3-phosphoglycerate + ATP = (2R)-3-phospho-glyceroyl phosphate + ADP. It functions in the pathway carbohydrate degradation; glycolysis; pyruvate from D-glyceraldehyde 3-phosphate: step 2/5. In Dechloromonas aromatica (strain RCB), this protein is Phosphoglycerate kinase.